A 226-amino-acid chain; its full sequence is Endonuclease NucS (226 aa).

This sequence belongs to the NucS endonuclease family.

It localises to the cytoplasm. Cleaves both 3' and 5' ssDNA extremities of branched DNA structures. The polypeptide is Endonuclease NucS (Mycobacterium tuberculosis (strain CDC 1551 / Oshkosh)).